Consider the following 302-residue polypeptide: uncharacterized protein (302 aa).

9 helical membrane-spanning segments follow: residues 3–23 (ILGV…SDWF), 39–59 (FVIG…LTSA), 77–97 (SCIC…PIIV), 106–126 (LVYL…FSWI), 128–148 (GVVL…NGSA), 163–183 (FSLV…ELFV), 199–219 (VIGF…VSLA), 227–247 (GMVL…ALAV), and 254–274 (LPAE…LYLF).

Belongs to the Ca(2+):cation antiporter (CaCA) (TC 2.A.19) family.

It localises to the cell membrane. This is an uncharacterized protein from Methanocaldococcus jannaschii (strain ATCC 43067 / DSM 2661 / JAL-1 / JCM 10045 / NBRC 100440) (Methanococcus jannaschii).